The chain runs to 185 residues: Protein GrpE (185 aa).

This sequence belongs to the GrpE family. As to quaternary structure, homodimer.

The protein resides in the cytoplasm. Its function is as follows. Participates actively in the response to hyperosmotic and heat shock by preventing the aggregation of stress-denatured proteins, in association with DnaK and GrpE. It is the nucleotide exchange factor for DnaK and may function as a thermosensor. Unfolded proteins bind initially to DnaJ; upon interaction with the DnaJ-bound protein, DnaK hydrolyzes its bound ATP, resulting in the formation of a stable complex. GrpE releases ADP from DnaK; ATP binding to DnaK triggers the release of the substrate protein, thus completing the reaction cycle. Several rounds of ATP-dependent interactions between DnaJ, DnaK and GrpE are required for fully efficient folding. This chain is Protein GrpE, found in Methanobrevibacter smithii (strain ATCC 35061 / DSM 861 / OCM 144 / PS).